An 85-amino-acid polypeptide reads, in one-letter code: MSSLDKTMHFDFNQNKGKNVYDTLQDVYNALEEKGYSPINQIVGYLLSGDPAYIPRHNDARNLILKHERDEIIEELVKSYLGKNK.

This sequence belongs to the UPF0297 family.

This chain is UPF0297 protein LGAS_0422, found in Lactobacillus gasseri (strain ATCC 33323 / DSM 20243 / BCRC 14619 / CIP 102991 / JCM 1131 / KCTC 3163 / NCIMB 11718 / NCTC 13722 / AM63).